A 178-amino-acid chain; its full sequence is CDP-diacylglycerol--glycerol-3-phosphate 3-phosphatidyltransferase (178 aa).

Transmembrane regions (helical) follow at residues 28–48, 88–108, 125–145, and 147–167; these read LSSL…GFFA, LIFF…IFLI, LFVS…VNFL, and ILTN…WVDY.

Belongs to the CDP-alcohol phosphatidyltransferase class-I family.

Its subcellular location is the cell membrane. The catalysed reaction is a CDP-1,2-diacyl-sn-glycerol + sn-glycerol 3-phosphate = a 1,2-diacyl-sn-glycero-3-phospho-(1'-sn-glycero-3'-phosphate) + CMP + H(+). It functions in the pathway phospholipid metabolism; phosphatidylglycerol biosynthesis; phosphatidylglycerol from CDP-diacylglycerol: step 1/2. Its function is as follows. This protein catalyzes the committed step to the synthesis of the acidic phospholipids. The chain is CDP-diacylglycerol--glycerol-3-phosphate 3-phosphatidyltransferase (pgsA) from Aquifex aeolicus (strain VF5).